The sequence spans 141 residues: Galactose-6-phosphate isomerase subunit LacA (141 aa).

Belongs to the LacAB/RpiB family. In terms of assembly, heteromultimeric protein consisting of LacA and LacB.

It carries out the reaction aldehydo-D-galactose 6-phosphate = keto-D-tagatose 6-phosphate. It functions in the pathway carbohydrate metabolism; D-galactose 6-phosphate degradation; D-tagatose 6-phosphate from D-galactose 6-phosphate: step 1/1. This is Galactose-6-phosphate isomerase subunit LacA from Streptococcus pneumoniae (strain 70585).